A 243-amino-acid polypeptide reads, in one-letter code: UPF0502 protein RALTA_B0914 (243 aa).

Over residues 1–10 the composition is skewed to polar residues; that stretch reads MPSTPESDPT. Residues 1–23 form a disordered region; that stretch reads MPSTPESDPTQPGDRPARPALRP.

This sequence belongs to the UPF0502 family.

The polypeptide is UPF0502 protein RALTA_B0914 (Cupriavidus taiwanensis (strain DSM 17343 / BCRC 17206 / CCUG 44338 / CIP 107171 / LMG 19424 / R1) (Ralstonia taiwanensis (strain LMG 19424))).